The chain runs to 302 residues: Zinc transporter ZIP1 (302 aa).

Residues 1 to 6 (MEYLLQ) are Extracellular-facing. The helical transmembrane segment at 7-27 (VKIAALVGLLFLTLIFGFIPA) threads the bilayer. At 28–44 (RVKWFRDTDGTETHRTV) the chain is on the cytoplasmic side. The helical transmembrane segment at 45 to 65 (LSLISCFAGGVFLSACFLDII) threads the bilayer. The Extracellular portion of the chain corresponds to 66–80 (PDYLSDINTELHARQ). The helical transmembrane segment at 81–101 (LETSFPLPEFIMAAGFFTVLI) threads the bilayer. The Cytoplasmic portion of the chain corresponds to 102–158 (LERIVLNCKEMRATHEERTTLIPERKSGHGHGHGDGPDPESSGHHVHVDFQAHSPFR). The disordered stretch occupies residues 123 to 145 (IPERKSGHGHGHGDGPDPESSGH). Residues 159–179 (SFMLFLSLSLHSIFEGLAIGL) form a helical membrane-spanning segment. The Extracellular segment spans residues 180-185 (QTTDPK). The helical transmembrane segment at 186–206 (VVEICIAILVHKSIIVFSLAV) threads the bilayer. The Cytoplasmic portion of the chain corresponds to 207 to 216 (KLVQSAIPPL). Residues 217-237 (WVAAYIGVFALMSPVGIAIGI) form a helical membrane-spanning segment. Over 238–251 (SVMEAQLAAGPLIQ) the chain is Extracellular. Residues 252–272 (AILEGFAAGTFVYITFLEILP) form a helical membrane-spanning segment. The Cytoplasmic segment spans residues 273-281 (HELNSPGKQ). The chain crosses the membrane as a helical span at residues 282–302 (LLKVLFLLLGFSIMAALSFLG).

It belongs to the ZIP transporter (TC 2.A.5) family. Highest levels in ovary, lower levels in intestine and gill, barely detected in kidney.

The protein localises to the cell membrane. It is found in the endoplasmic reticulum membrane. The enzyme catalyses Zn(2+)(in) = Zn(2+)(out). Its function is as follows. Transporter for the divalent cation Zn(2+). Mediates the influx of Zn(2+) into cells from extracellular space. The sequence is that of Zinc transporter ZIP1 (slc39a1) from Takifugu rubripes (Japanese pufferfish).